Reading from the N-terminus, the 154-residue chain is MSTNKINKKSIARIAAVQALYQNILQNNYDMYDIMQNILACYHSNSIDLPKNFKISLSISHFKMLVKSVFENINKLDEIIDNHLTNDKDPVHMPILLRALLRVSICELLFCSTTPAKVVINEYTDIANDLLNEHEIGFVNSILDKIAQENNKIS.

This sequence belongs to the NusB family.

Involved in transcription antitermination. Required for transcription of ribosomal RNA (rRNA) genes. Binds specifically to the boxA antiterminator sequence of the ribosomal RNA (rrn) operons. The protein is Transcription antitermination protein NusB of Rickettsia typhi (strain ATCC VR-144 / Wilmington).